The primary structure comprises 2286 residues: DNA polymerase epsilon catalytic subunit A (2286 aa).

A disordered region spans residues 1 to 30; that stretch reads MSLRSGGRRRADPGADGEASRDDGATSSVS. Positions 9–24 are enriched in basic and acidic residues; sequence RRADPGADGEASRDDG. Residues Ser1184, Ser1297, Ser1317, and Ser1940 each carry the phosphoserine modification. A disordered region spans residues 1939-1969; the sequence is DSQKAGGAEDEQENEDDEEERDGEEEEEAEE. A compositionally biased stretch (acidic residues) spans 1946 to 1969; the sequence is AEDEQENEDDEEERDGEEEEEAEE. Zn(2+) contacts are provided by Cys2158, Cys2161, Cys2187, and Cys2190. Residues 2158-2190 form a CysA-type zinc finger; sequence CRSCNFCRDLDLCKDSSFSEDGAVLPQWLCSNC. Cys2221, Cys2224, Cys2236, and Cys2238 together coordinate [4Fe-4S] cluster. Positions 2221–2238 match the CysB motif motif; that stretch reads CLKCRGVKETSMPVYCSC.

It belongs to the DNA polymerase type-B family. In terms of assembly, component of the DNA polymerase epsilon complex consisting of four subunits: the catalytic subunit POLE and the accessory subunits POLE2, POLE3 and POLE4. Interacts with RAD17 and TOPBP1.

The protein localises to the nucleus. It carries out the reaction DNA(n) + a 2'-deoxyribonucleoside 5'-triphosphate = DNA(n+1) + diphosphate. Functionally, catalytic component of the DNA polymerase epsilon complex. Participates in chromosomal DNA replication. Required during synthesis of the leading DNA strands at the replication fork, binds at/or near replication origins and moves along DNA with the replication fork. Has 3'-5' proofreading exonuclease activity that corrects errors arising during DNA replication. Involved in DNA synthesis during DNA repair. Along with DNA polymerase POLD1 and DNA polymerase POLK, has a role in excision repair (NER) synthesis following UV irradiation. The polypeptide is DNA polymerase epsilon catalytic subunit A (Homo sapiens (Human)).